Reading from the N-terminus, the 418-residue chain is Putative ion-transport protein YfeO (418 aa).

12 helical membrane-spanning segments follow: residues 10–30 (LLLS…LIMV), 54–74 (DSPL…GLVI), 99–119 (ALPG…SLGP), 120–140 (EHPI…RLLP), 149–169 (ILAS…AALI), 186–206 (LFAP…FFHP), 223–243 (ILSG…AVWC), 258–278 (VFVL…GGPV), 300–320 (DYFL…ASGF), 322–342 (GGRI…LHEH), 343–363 (VPAV…VLVV), and 371–391 (LFMA…CIVM).

This sequence belongs to the chloride channel (TC 2.A.49) family.

It localises to the cell membrane. This is Putative ion-transport protein YfeO from Escherichia coli O45:K1 (strain S88 / ExPEC).